Here is a 180-residue protein sequence, read N- to C-terminus: Bifunctional protein PyrR (180 aa).

The short motif at valine 99–threonine 111 is the PRPP-binding element.

This sequence belongs to the purine/pyrimidine phosphoribosyltransferase family. PyrR subfamily. Homodimer and homohexamer; in equilibrium.

The enzyme catalyses UMP + diphosphate = 5-phospho-alpha-D-ribose 1-diphosphate + uracil. Its function is as follows. Regulates transcriptional attenuation of the pyrimidine nucleotide (pyr) operon by binding in a uridine-dependent manner to specific sites on pyr mRNA. This disrupts an antiterminator hairpin in the RNA and favors formation of a downstream transcription terminator, leading to a reduced expression of downstream genes. In terms of biological role, also displays a weak uracil phosphoribosyltransferase activity which is not physiologically significant. The protein is Bifunctional protein PyrR of Clostridium botulinum (strain Alaska E43 / Type E3).